A 248-amino-acid polypeptide reads, in one-letter code: Glutathione S-transferase omega-2 (248 aa).

One can recognise a GST N-terminal domain in the interval 22–101 (GVIRIYSMRF…YLDDVFPGRK (80 aa)). Cys-32 functions as the Nucleophile in the catalytic mechanism. Residues Lys-59, Val-72, and 85–86 (ES) contribute to the glutathione site. The GST C-terminal domain occupies 106–231 (DPYERARQKM…IFLGFLNLYF (126 aa)).

The protein belongs to the GST superfamily. Omega family.

The enzyme catalyses RX + glutathione = an S-substituted glutathione + a halide anion + H(+). It catalyses the reaction L-dehydroascorbate + 2 glutathione = glutathione disulfide + L-ascorbate. The catalysed reaction is methylarsonate + 2 glutathione + H(+) = methylarsonous acid + glutathione disulfide + H2O. In terms of biological role, exhibits glutathione-dependent thiol transferase activity. Has high dehydroascorbate reductase activity and may contribute to the recycling of ascorbic acid. Participates in the biotransformation of inorganic arsenic and reduces monomethylarsonic acid (MMA). The protein is Glutathione S-transferase omega-2 (Gsto2) of Rattus norvegicus (Rat).